The chain runs to 267 residues: Mediator of RNA polymerase II transcription subunit 18 (267 aa).

This sequence belongs to the Mediator complex subunit 18 family. In terms of assembly, component of the Mediator complex.

It is found in the nucleus. In terms of biological role, component of the Mediator complex, a coactivator involved in the regulated transcription of nearly all RNA polymerase II-dependent genes. Mediator functions as a bridge to convey information from gene-specific regulatory proteins to the basal RNA polymerase II transcription machinery. Mediator is recruited to promoters by direct interactions with regulatory proteins and serves as a scaffold for the assembly of a functional preinitiation complex with RNA polymerase II and the general transcription factors. This is Mediator of RNA polymerase II transcription subunit 18 (SRB5) from Coccidioides immitis (strain RS) (Valley fever fungus).